Here is a 23-residue protein sequence, read N- to C-terminus: Conotoxin as25a (23 aa).

Proline 4 carries the 4-hydroxyproline; partial modification. Proline 23 is subject to 4-hydroxyproline; partial; alternate. A Proline amide; alternate modification is found at proline 23.

The name as25b given in PubMed:23474143 corresponds to the hydroxylated peptide. The amidation of the C-terminus of this hydroxylated peptide is not directly confirmed. Post-translationally, contains 3 disulfide bonds. In terms of tissue distribution, expressed by the venom duct.

It localises to the secreted. Upon intracranial injection in mice, as25a (the toxin without the two 4-hydroxyprolines) provokes paralysis of the hind limbs and death with a dose of 240 pmol. The polypeptide is Conotoxin as25a (Conus cancellatus (Cancellate cone)).